The chain runs to 451 residues: CDP-diacylglycerol--serine O-phosphatidyltransferase PssA (451 aa).

2 PLD phosphodiesterase domains span residues 27–224 and 239–451; these read VDFF…ELRD and SVTP…SRIL. A CDP-1,2-diacyl-sn-glycerol-binding residues include leucine 56, tyrosine 57, arginine 91, arginine 94, arginine 96, isoleucine 97, glutamate 132, alanine 133, valine 136, histidine 138, lysine 140, glycine 152, tyrosine 159, and arginine 167. The active site involves histidine 138. Aspartate 169 is a catalytic residue. The a CDP-1,2-diacyl-sn-glycerol site is built by tyrosine 273, aspartate 305, phenylalanine 306, isoleucine 316, isoleucine 317, leucine 320, leucine 323, and tyrosine 324. Histidine 357 is a catalytic residue. Residues lysine 359, asparagine 374, and arginine 378 each coordinate a CDP-1,2-diacyl-sn-glycerol. Residue glutamate 385 is part of the active site. Residues leucine 438, isoleucine 447, isoleucine 450, and leucine 451 each contribute to the a CDP-1,2-diacyl-sn-glycerol site.

It belongs to the CDP-alcohol phosphatidyltransferase class-II family. As to quaternary structure, multimeric. Interacts with ACP, YbgC and PlsB, forming altogether a complex at the inner membrane. Monomeric and dimeric; existing in equilibrium, but the monomer probably exhibits preferential membrane association.

The protein localises to the cytoplasm. It localises to the cell inner membrane. It catalyses the reaction a CDP-1,2-diacyl-sn-glycerol + L-serine = a 1,2-diacyl-sn-glycero-3-phospho-L-serine + CMP + H(+). The protein operates within phospholipid metabolism; phosphatidylethanolamine biosynthesis; phosphatidylethanolamine from CDP-diacylglycerol: step 1/2. In terms of biological role, catalyzes the conversion of cytidine diphosphate diacylglycerol (CDP-DG) and L-serine into phosphatidylserine. Essential for biosynthesis of phosphatidylethanolamine, one of the major membrane phospholipids. Phosphatidylserine is later converted into phosphatidylethanolamine via the action of phosphatidylserine decarboxylase psd. Associates with the bacterial membrane for its role, which depends on the levels of anionic phospholipids in the membrane. The chain is CDP-diacylglycerol--serine O-phosphatidyltransferase PssA (pssA) from Escherichia coli (strain K12).